The chain runs to 254 residues: Probable phosphoglycerate mutase 4 (254 aa).

Substrate contacts are provided by residues 10–17 (RHGESTWN) and 23–24 (SC). The Tele-phosphohistidine intermediate role is filled by His-11. Phosphoserine is present on residues Ser-14 and Ser-23. Tyr-26 is modified (phosphotyrosine). The residue at position 31 (Ser-31) is a Phosphoserine. Residues Arg-62, 89–92 (ERHY), and Lys-100 each bind substrate. Glu-89 serves as the catalytic Proton donor/acceptor. Lys-106 carries the N6-acetyllysine modification. Residue 116-117 (RR) participates in substrate binding. Ser-118 bears the Phosphoserine mark. 187–188 (GN) lines the substrate pocket. An N6-acetyllysine; alternate modification is found at Lys-251. Position 251 is an N6-succinyllysine; alternate (Lys-251). N6-acetyllysine is present on residues Lys-253 and Lys-254.

It belongs to the phosphoglycerate mutase family. BPG-dependent PGAM subfamily.

It carries out the reaction (2R)-2-phosphoglycerate = (2R)-3-phosphoglycerate. It catalyses the reaction (2R)-3-phospho-glyceroyl phosphate = (2R)-2,3-bisphosphoglycerate + H(+). The protein is Probable phosphoglycerate mutase 4 (PGAM4) of Pan troglodytes (Chimpanzee).